We begin with the raw amino-acid sequence, 121 residues long: Large ribosomal subunit protein eL31 (121 aa).

The protein belongs to the eukaryotic ribosomal protein eL31 family.

The protein is Large ribosomal subunit protein eL31 (RPL31) of Panax ginseng (Korean ginseng).